Consider the following 365-residue polypeptide: Tubulin-like protein CetZ (365 aa).

Residues 10 to 14, 103 to 105, Glu-136, Asn-163, and Asn-181 each bind GTP; these read QCGTK and GTG.

It belongs to the CetZ family.

The protein resides in the cytoplasm. Involved in cell shape control. The chain is Tubulin-like protein CetZ from Pyrococcus horikoshii (strain ATCC 700860 / DSM 12428 / JCM 9974 / NBRC 100139 / OT-3).